A 376-amino-acid chain; its full sequence is Chaperone protein DnaJ (376 aa).

The J domain occupies 5-70 (DYYEILGVSK…QKRAAYDQYG (66 aa)). A CR-type zinc finger spans residues 131–209 (GVTKEIRIPT…CHGHGRVERS (79 aa)). Zn(2+) is bound by residues C144, C147, C161, C164, C183, C186, C197, and C200. CXXCXGXG motif repeat units lie at residues 144-151 (CDVCHGSG), 161-168 (CPTCHGSG), 183-190 (CPHCQGRG), and 197-204 (CNKCHGHG).

Belongs to the DnaJ family. Homodimer. Zn(2+) serves as cofactor.

The protein resides in the cytoplasm. Functionally, participates actively in the response to hyperosmotic and heat shock by preventing the aggregation of stress-denatured proteins and by disaggregating proteins, also in an autonomous, DnaK-independent fashion. Unfolded proteins bind initially to DnaJ; upon interaction with the DnaJ-bound protein, DnaK hydrolyzes its bound ATP, resulting in the formation of a stable complex. GrpE releases ADP from DnaK; ATP binding to DnaK triggers the release of the substrate protein, thus completing the reaction cycle. Several rounds of ATP-dependent interactions between DnaJ, DnaK and GrpE are required for fully efficient folding. Also involved, together with DnaK and GrpE, in the DNA replication of plasmids through activation of initiation proteins. The chain is Chaperone protein DnaJ from Escherichia coli (strain K12 / DH10B).